Here is a 297-residue protein sequence, read N- to C-terminus: HTH-type transcriptional regulator ArgP (297 aa).

An HTH lysR-type domain is found at 4 to 60 (PDYRTLQALDAVIRERGFERAAQKLCITQSAVSQRIKQLENLFGQPLLVRTVPPRPT). Residues 21–40 (FERAAQKLCITQSAVSQRIK) constitute a DNA-binding region (H-T-H motif).

Belongs to the LysR transcriptional regulatory family. As to quaternary structure, homodimer.

Functionally, controls the transcription of genes involved in arginine and lysine metabolism. The protein is HTH-type transcriptional regulator ArgP of Serratia proteamaculans (strain 568).